A 211-amino-acid polypeptide reads, in one-letter code: Major fimbrial subunit (211 aa).

The N-terminal stretch at 1–20 (MKKTLLGSLILLAFAGNVQA) is a signal peptide. C43 and C83 form a disulfide bridge.

The protein belongs to the fimbrial protein family.

It is found in the fimbrium. Mediates adherence to oropharyngeal epithelial cells. Helps the airway colonization process. The polypeptide is Major fimbrial subunit (hifA) (Haemophilus influenzae).